Consider the following 119-residue polypeptide: Putative transmembrane protein ORF119 (119 aa).

The next 3 helical transmembrane spans lie at 9–29 (TLAI…PAMV), 73–93 (QYAG…SIFT), and 95–115 (PIAL…AFYY).

It localises to the host membrane. The sequence is that of Putative transmembrane protein ORF119 from Acidianus convivator (ATV).